We begin with the raw amino-acid sequence, 323 residues long: tRNA dimethylallyltransferase (323 aa).

ATP is bound at residue 12–19 (GPTAAGKT). 14 to 19 (TAAGKT) contributes to the substrate binding site. 2 interaction with substrate tRNA regions span residues 37 to 40 (DSAL) and 161 to 165 (QRLMR).

The protein belongs to the IPP transferase family. As to quaternary structure, monomer. Mg(2+) serves as cofactor.

The catalysed reaction is adenosine(37) in tRNA + dimethylallyl diphosphate = N(6)-dimethylallyladenosine(37) in tRNA + diphosphate. Functionally, catalyzes the transfer of a dimethylallyl group onto the adenine at position 37 in tRNAs that read codons beginning with uridine, leading to the formation of N6-(dimethylallyl)adenosine (i(6)A). This is tRNA dimethylallyltransferase from Pseudomonas paraeruginosa (strain DSM 24068 / PA7) (Pseudomonas aeruginosa (strain PA7)).